An 86-amino-acid chain; its full sequence is Small ribosomal subunit protein bS16 (86 aa).

Belongs to the bacterial ribosomal protein bS16 family.

The protein is Small ribosomal subunit protein bS16 of Bordetella petrii (strain ATCC BAA-461 / DSM 12804 / CCUG 43448).